A 161-amino-acid chain; its full sequence is NADH-quinone oxidoreductase subunit I (161 aa).

4Fe-4S ferredoxin-type domains lie at 52-82 (LRRY…IESE) and 92-121 (KRYD…ETRV). [4Fe-4S] cluster-binding residues include C62, C65, C68, C72, C101, C104, C107, and C111.

The protein belongs to the complex I 23 kDa subunit family. NDH-1 is composed of 14 different subunits. Subunits NuoA, H, J, K, L, M, N constitute the membrane sector of the complex. The cofactor is [4Fe-4S] cluster.

It localises to the cell inner membrane. The enzyme catalyses a quinone + NADH + 5 H(+)(in) = a quinol + NAD(+) + 4 H(+)(out). In terms of biological role, NDH-1 shuttles electrons from NADH, via FMN and iron-sulfur (Fe-S) centers, to quinones in the respiratory chain. The immediate electron acceptor for the enzyme in this species is believed to be ubiquinone. Couples the redox reaction to proton translocation (for every two electrons transferred, four hydrogen ions are translocated across the cytoplasmic membrane), and thus conserves the redox energy in a proton gradient. This is NADH-quinone oxidoreductase subunit I from Aromatoleum aromaticum (strain DSM 19018 / LMG 30748 / EbN1) (Azoarcus sp. (strain EbN1)).